A 359-amino-acid chain; its full sequence is Protein RecA (359 aa).

64-71 (GHESSGKT) contributes to the ATP binding site. Positions 329-359 (KYSNKDSNDSPKEGSKIKTKVNPAVTQDELI) are disordered. The segment covering 331–344 (SNKDSNDSPKEGSK) has biased composition (basic and acidic residues).

It belongs to the RecA family.

It localises to the cytoplasm. Functionally, can catalyze the hydrolysis of ATP in the presence of single-stranded DNA, the ATP-dependent uptake of single-stranded DNA by duplex DNA, and the ATP-dependent hybridization of homologous single-stranded DNAs. It interacts with LexA causing its activation and leading to its autocatalytic cleavage. This is Protein RecA from Francisella tularensis subsp. tularensis (strain FSC 198).